Here is a 448-residue protein sequence, read N- to C-terminus: UDP-N-acetylmuramoylalanine--D-glutamate ligase (448 aa).

112–118 (GSNAKST) contacts ATP.

Belongs to the MurCDEF family.

Its subcellular location is the cytoplasm. The catalysed reaction is UDP-N-acetyl-alpha-D-muramoyl-L-alanine + D-glutamate + ATP = UDP-N-acetyl-alpha-D-muramoyl-L-alanyl-D-glutamate + ADP + phosphate + H(+). It participates in cell wall biogenesis; peptidoglycan biosynthesis. In terms of biological role, cell wall formation. Catalyzes the addition of glutamate to the nucleotide precursor UDP-N-acetylmuramoyl-L-alanine (UMA). The polypeptide is UDP-N-acetylmuramoylalanine--D-glutamate ligase (Acinetobacter baylyi (strain ATCC 33305 / BD413 / ADP1)).